The primary structure comprises 425 residues: uncharacterized protein (425 aa).

An HD domain is found at 55-181 (RYAHSLGVYE…DLDTDRMDYL (127 aa)).

This is an uncharacterized protein from Mycoplasma genitalium (strain ATCC 33530 / DSM 19775 / NCTC 10195 / G37) (Mycoplasmoides genitalium).